The chain runs to 158 residues: SsrA-binding protein (158 aa).

It belongs to the SmpB family.

It localises to the cytoplasm. Functionally, required for rescue of stalled ribosomes mediated by trans-translation. Binds to transfer-messenger RNA (tmRNA), required for stable association of tmRNA with ribosomes. tmRNA and SmpB together mimic tRNA shape, replacing the anticodon stem-loop with SmpB. tmRNA is encoded by the ssrA gene; the 2 termini fold to resemble tRNA(Ala) and it encodes a 'tag peptide', a short internal open reading frame. During trans-translation Ala-aminoacylated tmRNA acts like a tRNA, entering the A-site of stalled ribosomes, displacing the stalled mRNA. The ribosome then switches to translate the ORF on the tmRNA; the nascent peptide is terminated with the 'tag peptide' encoded by the tmRNA and targeted for degradation. The ribosome is freed to recommence translation, which seems to be the essential function of trans-translation. The protein is SsrA-binding protein of Glaesserella parasuis serovar 5 (strain SH0165) (Haemophilus parasuis).